The primary structure comprises 505 residues: AMP phosphorylase (505 aa).

AMP is bound by residues Gly170, 196 to 201 (SRAITS), and Thr205. Residue Asp258 is the Proton donor of the active site. Residues Ser266 and Lys290 each coordinate AMP.

Belongs to the thymidine/pyrimidine-nucleoside phosphorylase family. Type 2 subfamily.

It catalyses the reaction AMP + phosphate = alpha-D-ribose 1,5-bisphosphate + adenine. It carries out the reaction CMP + phosphate = cytosine + alpha-D-ribose 1,5-bisphosphate. The catalysed reaction is UMP + phosphate = alpha-D-ribose 1,5-bisphosphate + uracil. Its function is as follows. Catalyzes the conversion of AMP and phosphate to adenine and ribose 1,5-bisphosphate (R15P). Exhibits phosphorylase activity toward CMP and UMP in addition to AMP. Functions in an archaeal AMP degradation pathway, together with R15P isomerase and RubisCO. The chain is AMP phosphorylase from Methanococcus maripaludis (strain C7 / ATCC BAA-1331).